Here is a 980-residue protein sequence, read N- to C-terminus: Exportin-T (980 aa).

This sequence belongs to the exportin family. Expressed in roots, stems, leaves, flowers and embryos.

It is found in the nucleus. Its subcellular location is the cytoplasm. In terms of biological role, probable tRNA nucleus export receptor which regulates tRNA processing and facilitates tRNA translocation across the nuclear pore complex. Is required for correct leaf initiation at different developmental stages and may play a role in floral patterning. In Oryza sativa subsp. japonica (Rice), this protein is Exportin-T.